Here is a 530-residue protein sequence, read N- to C-terminus: Sulfate adenylyltransferase (530 aa).

The tract at residues 1-178 (MPIPAPHGGK…IQGLDYPTHY (178 aa)) is N-terminal. The interval 179–410 (DYIPFRKTPT…LRESNPPRSK (232 aa)) is catalytic. Q208 lines the sulfate pocket. ATP contacts are provided by residues 208–211 (QTRN) and 304–307 (GRDH). Residues T209, R210, and N211 contribute to the active site. Position 210 (R210) interacts with sulfate. Sulfate is bound at residue A308. V348 contributes to the ATP binding site. Positions 411-530 (QGFAIVIDSS…LVSQGFYQQS (120 aa)) are required for oligomerization; adenylyl-sulfate kinase-like.

This sequence belongs to the sulfate adenylyltransferase family. As to quaternary structure, homohexamer. Dimer of trimers.

It localises to the cytoplasm. It carries out the reaction sulfate + ATP + H(+) = adenosine 5'-phosphosulfate + diphosphate. It participates in sulfur metabolism; hydrogen sulfide biosynthesis; sulfite from sulfate: step 1/3. Its function is as follows. Catalyzes the first intracellular reaction of sulfate assimilation, forming adenosine-5'-phosphosulfate (APS) from inorganic sulfate and ATP. Plays an important role in sulfate activation as a component of the biosynthesis pathway of sulfur-containing amino acids. This is Sulfate adenylyltransferase from Debaryomyces hansenii (strain ATCC 36239 / CBS 767 / BCRC 21394 / JCM 1990 / NBRC 0083 / IGC 2968) (Yeast).